The chain runs to 255 residues: NAD kinase (255 aa).

Asp-44 serves as the catalytic Proton acceptor. NAD(+) is bound by residues 44 to 45 (DG), His-49, 114 to 115 (NE), Asp-144, Ala-152, 155 to 160 (SAYNLS), and Gln-216.

This sequence belongs to the NAD kinase family. It depends on a divalent metal cation as a cofactor.

It localises to the cytoplasm. The catalysed reaction is NAD(+) + ATP = ADP + NADP(+) + H(+). In terms of biological role, involved in the regulation of the intracellular balance of NAD and NADP, and is a key enzyme in the biosynthesis of NADP. Catalyzes specifically the phosphorylation on 2'-hydroxyl of the adenosine moiety of NAD to yield NADP. The protein is NAD kinase of Rickettsia canadensis (strain McKiel).